Consider the following 444-residue polypeptide: Trigger factor (444 aa).

A PPIase FKBP-type domain is found at 185 to 270; it reads GDKLIIDFEG…VNEIQIAKDF (86 aa).

This sequence belongs to the FKBP-type PPIase family. Tig subfamily.

Its subcellular location is the cytoplasm. The enzyme catalyses [protein]-peptidylproline (omega=180) = [protein]-peptidylproline (omega=0). Involved in protein export. Acts as a chaperone by maintaining the newly synthesized protein in an open conformation. Functions as a peptidyl-prolyl cis-trans isomerase. The chain is Trigger factor from Wolbachia pipientis wMel.